Reading from the N-terminus, the 651-residue chain is Transcription termination factor FttA (651 aa).

Residues 1–200 (MTFLIKRETQ…ITGLGGFREV (200 aa)) are archaeal CPSF-KH domain. A KHa region spans residues 12-79 (DQILRDIRAV…ISVRPDPEVL (68 aa)). Residues 80–147 (LPPEEAEKLI…WAPKVVRTPP (68 aa)) are KHb. A metallo-beta-lactamase N-terminus region spans residues 188 to 398 (WIRITGLGGF…LVMESTYGGA (211 aa)). 6 residues coordinate Zn(2+): His256, His258, Asp260, His261, His344, and Asp367. The beta-Casp stretch occupies residues 399–592 (NDIQMPREEA…MEVHTIDGFS (194 aa)). A metallo-beta-lactamase C-terminus region spans residues 593–651 (GHADRRELMNYVAKVRPRPERIITVHGEPQKCLDLATSIHRKFGISTRAPNNLDTIRLR). Position 618 (His618) interacts with Zn(2+).

Belongs to the metallo-beta-lactamase superfamily. RNA-metabolizing metallo-beta-lactamase-like family. FttA subfamily. In terms of assembly, homodimer. Interacts with RNA polymerase (RNAP), interacts with the Spt4-Spt5 complex. The cofactor is Zn(2+).

In terms of biological role, terminates transcription on the whole genome. Termination is linked to FttA-mediated RNA cleavage and does not require NTP hydrolysis. Cleaves endonucleolytically at the RNA exit channel of RNA polymerase (RNAP); the 5'-3' exonuclease activity of this protein degrades the nascent RNA released from RNAP. Functionally, has nuclease activity on single-stranded RNA. The polypeptide is Transcription termination factor FttA (Pyrococcus horikoshii (strain ATCC 700860 / DSM 12428 / JCM 9974 / NBRC 100139 / OT-3)).